A 231-amino-acid chain; its full sequence is Orotate phosphoribosyltransferase (231 aa).

Residues Lys-27, 79–80 (YK), Arg-106, Lys-107, Lys-110, His-112, and 133–141 (DDVMTAGTA) contribute to the 5-phospho-alpha-D-ribose 1-diphosphate site. Orotate-binding residues include Thr-137 and Arg-166.

Belongs to the purine/pyrimidine phosphoribosyltransferase family. PyrE subfamily. Homodimer. It depends on Mg(2+) as a cofactor.

It catalyses the reaction orotidine 5'-phosphate + diphosphate = orotate + 5-phospho-alpha-D-ribose 1-diphosphate. It functions in the pathway pyrimidine metabolism; UMP biosynthesis via de novo pathway; UMP from orotate: step 1/2. Functionally, catalyzes the transfer of a ribosyl phosphate group from 5-phosphoribose 1-diphosphate to orotate, leading to the formation of orotidine monophosphate (OMP). This chain is Orotate phosphoribosyltransferase, found in Bifidobacterium longum (strain DJO10A).